A 60-amino-acid polypeptide reads, in one-letter code: Large ribosomal subunit protein bL32 (60 aa).

Belongs to the bacterial ribosomal protein bL32 family.

This is Large ribosomal subunit protein bL32 (rpmF) from Thermotoga maritima (strain ATCC 43589 / DSM 3109 / JCM 10099 / NBRC 100826 / MSB8).